We begin with the raw amino-acid sequence, 751 residues long: Proton-associated sugar transporter A (751 aa).

6 helical membrane-spanning segments follow: residues 93–113, 123–143, 155–175, 191–211, 233–253, and 268–288; these read ILFG…PVLL, SLVW…LGAW, RPFI…LLNG, WGIL…DSAD, IHAL…GIHW, and VIYV…LISI. Thr-500 is modified (phosphothreonine). 6 helical membrane-spanning segments follow: residues 536–556, 576–596, 606–626, 630–650, 688–708, and 710–730; these read GWLS…EVVF, VTMG…YSAI, VRTL…LATL, LYVV…LCTL, FLAQ…VGSA, and GVMY…SLCV.

This sequence belongs to the glycoside-pentoside-hexuronide (GPH) cation symporter transporter (TC 2.A.2) family.

The protein localises to the membrane. The catalysed reaction is D-galactose(in) + H(+)(in) = D-galactose(out) + H(+)(out). It catalyses the reaction D-glucose(out) + H(+)(out) = D-glucose(in) + H(+)(in). Its function is as follows. Proton-associated glucose transporter in the brain. This Mus musculus (Mouse) protein is Proton-associated sugar transporter A.